The sequence spans 394 residues: DNA replication and repair protein RecF (394 aa).

Position 30–37 (30–37 (GPNAAGKT)) interacts with ATP.

The protein belongs to the RecF family.

It localises to the cytoplasm. Its function is as follows. The RecF protein is involved in DNA metabolism; it is required for DNA replication and normal SOS inducibility. RecF binds preferentially to single-stranded, linear DNA. It also seems to bind ATP. The protein is DNA replication and repair protein RecF of Roseiflexus castenholzii (strain DSM 13941 / HLO8).